The sequence spans 467 residues: Matrix metalloproteinase-18 (467 aa).

A signal peptide spans 1-17 (MNSLLLKLLLCVAITAA). Residues 18-99 (FPADKQDEPP…PRCGVYDVGQ (82 aa)) constitute a propeptide that is removed on maturation. Positions 90–97 (PRCGVYDV) match the Cysteine switch motif. Zn(2+)-binding residues include Cys-92 and His-218. Glu-219 is a catalytic residue. Residues His-222 and His-228 each coordinate Zn(2+). Hemopexin repeat units lie at residues 277–326 (PSRC…WPSL), 327–373 (PTNI…GFPK), 375–423 (VKRI…FPGI), and 424–467 (PDKI…WLGC). Residues Cys-280 and Cys-467 are joined by a disulfide bond.

This sequence belongs to the peptidase M10A family. Requires Zn(2+) as cofactor. It depends on Ca(2+) as a cofactor. As to expression, expressed only transiently in whole animal, at time when tadpole feeding begins.

The protein localises to the secreted. The protein resides in the extracellular space. It localises to the extracellular matrix. With respect to regulation, up-regulated in the tail by thyroid hormone. Cleaves collagen type I. May play a role in larval tissue degeneration and adult organogenesis during amphibian metamorphosis. May be involved in tail resorption. The protein is Matrix metalloproteinase-18 (mmp18) of Xenopus laevis (African clawed frog).